The sequence spans 412 residues: Protein BTN1 (412 aa).

The signal sequence occupies residues 1–29 (MDRRKLIFGKFWLFGLLNNVLYVVILAAA). The next 9 membrane-spanning stretches (helical) occupy residues 41–61 (LILL…PFFI), 70–90 (IWSL…GRLG), 91–111 (VCIV…ITFL), 131–151 (GAGL…KIPV), 154–174 (SLLL…LQVE), 234–254 (VLVV…YLIN), 281–300 (IYVA…RSSG), 307–329 (GLYL…SWYY), and 334–356 (VWVI…VNSF).

This sequence belongs to the battenin family.

The protein resides in the vacuole membrane. In terms of biological role, involved in vacuolar transport and vacuole pH homeostasis. Also required for cytokinesis. The polypeptide is Protein BTN1 (BTN1) (Eremothecium gossypii (strain ATCC 10895 / CBS 109.51 / FGSC 9923 / NRRL Y-1056) (Yeast)).